Reading from the N-terminus, the 1207-residue chain is Putative coatomer subunit alpha (1207 aa).

WD repeat units lie at residues S9–D50, G51–S90, G93–T134, G135–A174, G210–V249, G254–T293, R296–N336, and S370–P411. Phosphoserine is present on residues S409 and S942.

Oligomeric complex that consists of at least the alpha, beta, beta', gamma, delta, epsilon and zeta subunits.

It localises to the cytoplasm. The protein localises to the golgi apparatus membrane. Its function is as follows. The coatomer is a cytosolic protein complex that binds to dilysine motifs and reversibly associates with Golgi non-clathrin-coated vesicles, which further mediate biosynthetic protein transport from the ER, via the Golgi up to the trans Golgi network. Coatomer complex is required for budding from Golgi membranes, and is essential for the retrograde Golgi-to-ER transport of dilysine-tagged proteins. In Schizosaccharomyces pombe (strain 972 / ATCC 24843) (Fission yeast), this protein is Putative coatomer subunit alpha.